Here is a 388-residue protein sequence, read N- to C-terminus: Oxytocin receptor (388 aa).

The Extracellular portion of the chain corresponds to Met1–Leu38. Residues Asn8 and Asn26 are each glycosylated (N-linked (GlcNAc...) asparagine). The chain crosses the membrane as a helical span at residues Ala39 to Ala63. Residues Leu64–Leu74 are Cytoplasmic-facing. The chain crosses the membrane as a helical span at residues Phe75 to Leu97. The Extracellular portion of the chain corresponds to Leu98 to Arg113. Residues Cys112 and Cys187 are joined by a disulfide bond. The helical transmembrane segment at Leu114 to Leu135 threads the bilayer. Over Asp136 to Arg154 the chain is Cytoplasmic. Residues Leu155 to Phe175 traverse the membrane as a helical segment. Over Ser176–Thr202 the chain is Extracellular. The helical transmembrane segment at Trp203 to Phe225 threads the bilayer. Topologically, residues Lys226–Lys274 are cytoplasmic. Residues Met275–Val293 form a helical membrane-spanning segment. At Gln294–Ser308 the chain is on the extracellular side. Residues Ala309–Phe331 form a helical membrane-spanning segment. Topologically, residues Thr332–Ala388 are cytoplasmic. The segment at Ser354–Ala388 is disordered. 2 positions are modified to phosphoserine: Ser365 and Ser367. Residues Ser365 to Ala388 show a composition bias toward low complexity.

It belongs to the G-protein coupled receptor 1 family. Vasopressin/oxytocin receptor subfamily.

It localises to the cell membrane. Its function is as follows. Receptor for oxytocin. The activity of this receptor is mediated by G proteins which activate a phosphatidylinositol-calcium second messenger system. This Mus musculus (Mouse) protein is Oxytocin receptor (Oxtr).